Here is a 195-residue protein sequence, read N- to C-terminus: HTH-type transcriptional regulator BetI (195 aa).

In terms of domain architecture, HTH tetR-type spans 8 to 68 (PIRRQQLIEA…ATMRYLISHL (61 aa)). Residues 31–50 (SIVQIARRAGVSNGIISHYF) constitute a DNA-binding region (H-T-H motif).

It functions in the pathway amine and polyamine biosynthesis; betaine biosynthesis via choline pathway [regulation]. Functionally, repressor involved in the biosynthesis of the osmoprotectant glycine betaine. It represses transcription of the choline transporter BetT and the genes of BetAB involved in the synthesis of glycine betaine. This chain is HTH-type transcriptional regulator BetI, found in Pectobacterium carotovorum subsp. carotovorum (strain PC1).